The following is a 567-amino-acid chain: MSSIMEKTDVSSSKHSFTFEPSSDEVGKAAEIVDTHENFYDDQGDIDNPEELAELGYKQEFRRQLSLFGIFSISFSVLGMLPSVASTLVFGLWYVGYPGLLWAWLIAMFFLICVSMSMAEICSAMPTSGGLYYAAAVFAPKGWGPLASWITGWSNYIGNIIGQPSVNSSAASMILGAVTVNRPDFVIQRWQWFLLAVAIQCFNCVLACLPTRIISRINGVATYLNTAFLFIAGITILAYGGKNHNFVKGTKIWGDYINTTQWPTGFAILLSFNSPIWTMSGYDAPFHLSEECSNASVNAPKAIVMTAVIGGVVGWIMQIIVAYTLTDIDSVMNTSGSMWTAYLVQAMPPKAALGILSLTIISAIIMGQSALIASSRIAYSYARDGILPFSGWIGTVNPYTQTPVNAVICNCIISILILFLTFAGTVTLDAVFSVGAVAAFIAFTVPIAIRVFFTKDADFRRGPWNLGKFSRPIGLLAVSFVALMIPILCFPSVKNPTAQEMNWTCLVYGGPMLFTLVWYAISARKWFKGPKASAHYKRPGEESSDIVEGVQADIPSSSDQLKIKGDL.

10 helical membrane-spanning segments follow: residues Leu65–Ala85, Leu92–Ile112, Trp190–Pro210, Val220–Gly240, Ala302–Ala322, Leu353–Ala373, Ile412–Phe432, Val434–Thr454, Ile473–Val493, and Trp503–Ala523.

It belongs to the amino acid-polyamine-organocation (APC) superfamily.

The protein localises to the membrane. This is an uncharacterized protein from Schizosaccharomyces pombe (strain 972 / ATCC 24843) (Fission yeast).